We begin with the raw amino-acid sequence, 264 residues long: Small ribosomal subunit protein eS1 (264 aa).

Lys-34 carries the post-translational modification N6-acetyllysine; alternate. Residue Lys-34 forms a Glycyl lysine isopeptide (Lys-Gly) (interchain with G-Cter in SUMO2); alternate linkage. An N6-acetyllysine modification is found at Lys-56. Residue Tyr-155 is modified to ADP-ribosyltyrosine. The tract at residues 233–264 (GEGGSSGKAAGDETGAKVERADGYEPPVQESV) is disordered. Position 237 is a phosphoserine (Ser-237). Basic and acidic residues predominate over residues 242-255 (AGDETGAKVERADG). Lys-249 is modified (N6-acetyllysine; alternate). Residue Lys-249 forms a Glycyl lysine isopeptide (Lys-Gly) (interchain with G-Cter in SUMO2); alternate linkage. Tyr-256 is subject to Phosphotyrosine. Ser-263 is subject to Phosphoserine.

It belongs to the eukaryotic ribosomal protein eS1 family. In terms of assembly, component of the small ribosomal subunit. Mature ribosomes consist of a small (40S) and a large (60S) subunit. The 40S subunit contains about 33 different proteins and 1 molecule of RNA (18S). The 60S subunit contains about 49 different proteins and 3 molecules of RNA (28S, 5.8S and 5S). Identified in a IGF2BP1-dependent mRNP granule complex containing untranslated mRNAs. Binds with high affinity to IPO4. Interacts with DDIT3. Part of the small subunit (SSU) processome, composed of more than 70 proteins and the RNA chaperone small nucleolar RNA (snoRNA) U3. ADP-ribosylated at Tyr-155 by PARP1 in presence of HPF1.

The protein resides in the cytoplasm. Its subcellular location is the nucleus. It is found in the nucleolus. In terms of biological role, component of the small ribosomal subunit. The ribosome is a large ribonucleoprotein complex responsible for the synthesis of proteins in the cell. Part of the small subunit (SSU) processome, first precursor of the small eukaryotic ribosomal subunit. During the assembly of the SSU processome in the nucleolus, many ribosome biogenesis factors, an RNA chaperone and ribosomal proteins associate with the nascent pre-rRNA and work in concert to generate RNA folding, modifications, rearrangements and cleavage as well as targeted degradation of pre-ribosomal RNA by the RNA exosome. May play a role during erythropoiesis through regulation of transcription factor DDIT3. In Mus musculus (Mouse), this protein is Small ribosomal subunit protein eS1 (Rps3a).